A 1079-amino-acid polypeptide reads, in one-letter code: Translation initiation factor IF-2 (1079 aa).

Composition is skewed to basic and acidic residues over residues 52–65, 75–90, and 102–134; these read VQAQ…KEGN, RDGD…KAPE, and APER…KEPQ. The segment at 52 to 488 is disordered; the sequence is VQAQRDGGAR…RGKKDVRPAA (437 aa). Over residues 150-184 the composition is skewed to low complexity; sequence APVAKVVEAAPAETPAPEAPAVKATVTAEAAPAKT. The segment covering 185-194 has biased composition (basic and acidic residues); the sequence is VEPESERPQA. The segment covering 276-291 has biased composition (low complexity); sequence AAVAQQQMQQQAAQQQ. Basic and acidic residues predominate over residues 306–327; it reads GGYRPEGQREGGYRPEGQREGG. 2 stretches are compositionally biased toward low complexity: residues 348–370 and 380–398; these read EGGY…GPRP and PGAP…APRP. A compositionally biased stretch (gly residues) spans 419-429; the sequence is PRPGGFGGAPG. Positions 461 to 471 are enriched in basic and acidic residues; that stretch reads PRGRSDDDVMR. The span at 473–482 shows a compositional bias: basic residues; the sequence is PRGRGKRGKK. The 168-residue stretch at 578-745 folds into the tr-type G domain; sequence TRPPVVTIMG…LIAIQAEILE (168 aa). The interval 587–594 is G1; it reads GHVDHGKT. 587 to 594 contacts GTP; the sequence is GHVDHGKT. The tract at residues 612–616 is G2; it reads GITQH. The G3 stretch occupies residues 633 to 636; sequence DTPG. GTP is bound by residues 633–637 and 687–690; these read DTPGH and NKMD. Residues 687-690 are G4; it reads NKMD. The segment at 723 to 725 is G5; sequence SAK.

It belongs to the TRAFAC class translation factor GTPase superfamily. Classic translation factor GTPase family. IF-2 subfamily.

The protein localises to the cytoplasm. Functionally, one of the essential components for the initiation of protein synthesis. Protects formylmethionyl-tRNA from spontaneous hydrolysis and promotes its binding to the 30S ribosomal subunits. Also involved in the hydrolysis of GTP during the formation of the 70S ribosomal complex. This Nitratidesulfovibrio vulgaris (strain DP4) (Desulfovibrio vulgaris) protein is Translation initiation factor IF-2.